A 180-amino-acid chain; its full sequence is UPF0227 protein CKO_01948 (180 aa).

The protein belongs to the UPF0227 family.

The polypeptide is UPF0227 protein CKO_01948 (Citrobacter koseri (strain ATCC BAA-895 / CDC 4225-83 / SGSC4696)).